Reading from the N-terminus, the 244-residue chain is Probable histone-lysine N-methyltransferase set-23 (244 aa).

In terms of domain architecture, Pre-SET spans 25–86 (EGCNCEAECS…SCRNRVVQCG (62 aa)). Residues Cys-27, Cys-29, Cys-33, Cys-39, Cys-41, Cys-65, Cys-69, Cys-71, and Cys-78 each coordinate Zn(2+). The 125-residue stretch at 89-213 (KKLEIFSTCE…RGEELCYDYG (125 aa)) folds into the SET domain. S-adenosyl-L-methionine contacts are provided by residues 101–103 (KGF), Asp-141, Tyr-143, Arg-170, and 173–174 (NH). Residues Cys-176, Cys-225, Cys-227, and Cys-232 each coordinate Zn(2+). The Post-SET domain maps to 221–237 (NRKLCLCKSEKCRKYLP).

Belongs to the class V-like SAM-binding methyltransferase superfamily. Histone-lysine methyltransferase family. Suvar3-9 subfamily.

It is found in the nucleus. The protein localises to the chromosome. It catalyses the reaction L-lysyl-[histone] + S-adenosyl-L-methionine = N(6)-methyl-L-lysyl-[histone] + S-adenosyl-L-homocysteine + H(+). Functionally, probable histone methyltransferase. Required for embryonic development. In Caenorhabditis elegans, this protein is Probable histone-lysine N-methyltransferase set-23 (set-23).